Reading from the N-terminus, the 244-residue chain is Large ribosomal subunit protein uL3 (244 aa).

The segment at 215–244 (KKPPRERRGFAGSSTVDPLKASKRAVAKKK) is disordered. Positions 235-244 (ASKRAVAKKK) are enriched in basic residues.

This sequence belongs to the universal ribosomal protein uL3 family. In terms of assembly, part of the 50S ribosomal subunit. Forms a cluster with proteins L14 and L19.

Its function is as follows. One of the primary rRNA binding proteins, it binds directly near the 3'-end of the 23S rRNA, where it nucleates assembly of the 50S subunit. This Koribacter versatilis (strain Ellin345) protein is Large ribosomal subunit protein uL3.